The following is an 84-amino-acid chain: Dolichol phosphate-mannose biosynthesis regulatory protein (84 aa).

Helical transmembrane passes span 11–31 (LGLVALSLIIFTYYTAWVILL) and 49–69 (YAIAIPLAAGHLLLLFVGIFI).

Belongs to the DPM2 family. As to quaternary structure, component of the dolichol-phosphate mannose (DPM) synthase complex composed of DPM1, DPM2 and DPM3; in the complex interacts directly with DPM3. Component of the glycosylphosphatidylinositol-N-acetylglucosaminyltransferase (GPI-GnT) complex composed at least by PIGA, PIGC, PIGH, PIGP, PIGQ, PIGY and DPM2. Interacts with PIGA, PIGC and PIGQ.

It localises to the endoplasmic reticulum membrane. It participates in protein modification; protein glycosylation. Functionally, regulates the biosynthesis of dolichol phosphate-mannose. Regulatory subunit of the dolichol-phosphate mannose (DPM) synthase complex; essential for the ER localization and stable expression of DPM1. Part of the glycosylphosphatidylinositol-N-acetylglucosaminyltransferase (GPI-GnT) complex that catalyzes the transfer of N-acetylglucosamine from UDP-N-acetylglucosamine to phosphatidylinositol and participates in the first step of GPI biosynthesis. May act by regulating the GPI-GNT complex. The chain is Dolichol phosphate-mannose biosynthesis regulatory protein from Bos taurus (Bovine).